The sequence spans 408 residues: Dual-specificity RNA methyltransferase RlmN (408 aa).

The active-site Proton acceptor is Glu93. The region spanning 99–379 (ETNRGTLCIS…TTTRKTRGDD (281 aa)) is the Radical SAM core domain. Cys106 and Cys384 are joined by a disulfide. 3 residues coordinate [4Fe-4S] cluster: Cys113, Cys117, and Cys120. The interval 152–196 (SPAGSKDGDGGPDHASRATKLDHRAADAKGVQSDSWRSSDPEEDH) is disordered. A compositionally biased stretch (basic and acidic residues) spans 157-178 (KDGDGGPDHASRATKLDHRAAD). Residues 210 to 211 (GE), Ser242, 264 to 266 (SLH), and Asn341 contribute to the S-adenosyl-L-methionine site. The active-site S-methylcysteine intermediate is the Cys384.

This sequence belongs to the radical SAM superfamily. RlmN family. Requires [4Fe-4S] cluster as cofactor.

The protein resides in the cytoplasm. The catalysed reaction is adenosine(2503) in 23S rRNA + 2 reduced [2Fe-2S]-[ferredoxin] + 2 S-adenosyl-L-methionine = 2-methyladenosine(2503) in 23S rRNA + 5'-deoxyadenosine + L-methionine + 2 oxidized [2Fe-2S]-[ferredoxin] + S-adenosyl-L-homocysteine. The enzyme catalyses adenosine(37) in tRNA + 2 reduced [2Fe-2S]-[ferredoxin] + 2 S-adenosyl-L-methionine = 2-methyladenosine(37) in tRNA + 5'-deoxyadenosine + L-methionine + 2 oxidized [2Fe-2S]-[ferredoxin] + S-adenosyl-L-homocysteine. Its function is as follows. Specifically methylates position 2 of adenine 2503 in 23S rRNA and position 2 of adenine 37 in tRNAs. m2A2503 modification seems to play a crucial role in the proofreading step occurring at the peptidyl transferase center and thus would serve to optimize ribosomal fidelity. This chain is Dual-specificity RNA methyltransferase RlmN, found in Aromatoleum aromaticum (strain DSM 19018 / LMG 30748 / EbN1) (Azoarcus sp. (strain EbN1)).